A 368-amino-acid chain; its full sequence is MTVKLTIDCMGGDHGPSVTVPAAVKFVRAHPDAHLMLVGIESAIRAQLKKLKALDDPALTIVPATEVVAMDDPVEVALRKKKDSSMRVALNHVKEGAAQACISAGNTGALMAVSRYVLKTLPGIERPAIAFALPNPTGYTMMLDLGANVDCEPQHLLQFAEMGHALVAALEGKERPTIGLLNIGEEVIKGNETIKRAGELLRASTLNFRGNVEGNDIYKGTVDVIVCDGFVGNVALKTSEGLAQMLSDIIREEFGRSLMSKLMALLALPVLMRFKKRVDHRQYNGAALLGLKSLVIKSHGSADAYAFEWAIKRGYDAVKNGVLERLTRAMADNSVSLGDGEHDAGGAGHTGPAAGQHAEPPAAQSSKA.

A disordered region spans residues Val-335 to Ala-368.

Belongs to the PlsX family. In terms of assembly, homodimer. Probably interacts with PlsY.

It is found in the cytoplasm. The enzyme catalyses a fatty acyl-[ACP] + phosphate = an acyl phosphate + holo-[ACP]. Its pathway is lipid metabolism; phospholipid metabolism. Its function is as follows. Catalyzes the reversible formation of acyl-phosphate (acyl-PO(4)) from acyl-[acyl-carrier-protein] (acyl-ACP). This enzyme utilizes acyl-ACP as fatty acyl donor, but not acyl-CoA. In Burkholderia vietnamiensis (strain G4 / LMG 22486) (Burkholderia cepacia (strain R1808)), this protein is Phosphate acyltransferase.